The primary structure comprises 218 residues: Cytochrome b6 (218 aa).

Residues 35–55 (IFYCLGGITLVCFLIQFATGF) traverse the membrane as a helical segment. Residue Cys38 coordinates heme c. His89 and His103 together coordinate heme b. 3 helical membrane passes run 93–113 (ASMM…TGGF), 119–139 (LTWV…VTGY), and 189–209 (LHTF…FLMI). Heme b is bound by residues His190 and His205.

Belongs to the cytochrome b family. PetB subfamily. As to quaternary structure, the 4 large subunits of the cytochrome b6-f complex are cytochrome b6, subunit IV (17 kDa polypeptide, PetD), cytochrome f and the Rieske protein, while the 4 small subunits are PetG, PetL, PetM and PetN. The complex functions as a dimer. Heme b is required as a cofactor. It depends on heme c as a cofactor.

The protein resides in the cellular thylakoid membrane. Its function is as follows. Component of the cytochrome b6-f complex, which mediates electron transfer between photosystem II (PSII) and photosystem I (PSI), cyclic electron flow around PSI, and state transitions. The polypeptide is Cytochrome b6 (Prochlorococcus marinus subsp. pastoris (strain CCMP1986 / NIES-2087 / MED4)).